The primary structure comprises 328 residues: D-cysteine desulfhydrase (328 aa).

An N6-(pyridoxal phosphate)lysine modification is found at Lys-51.

This sequence belongs to the ACC deaminase/D-cysteine desulfhydrase family. In terms of assembly, homodimer. Pyridoxal 5'-phosphate is required as a cofactor.

The catalysed reaction is D-cysteine + H2O = hydrogen sulfide + pyruvate + NH4(+) + H(+). Functionally, catalyzes the alpha,beta-elimination reaction of D-cysteine and of several D-cysteine derivatives. It could be a defense mechanism against D-cysteine. The chain is D-cysteine desulfhydrase from Escherichia coli O6:H1 (strain CFT073 / ATCC 700928 / UPEC).